A 203-amino-acid polypeptide reads, in one-letter code: Recombination protein RecR (203 aa).

A C4-type zinc finger spans residues 57-72; that stretch reads CQRCRTLAETPLCSIC. One can recognise a Toprim domain in the interval 80-175; it reads GLLCVVESPA…RLSRLAYGVP (96 aa).

It belongs to the RecR family.

Functionally, may play a role in DNA repair. It seems to be involved in an RecBC-independent recombinational process of DNA repair. It may act with RecF and RecO. This chain is Recombination protein RecR, found in Chromohalobacter salexigens (strain ATCC BAA-138 / DSM 3043 / CIP 106854 / NCIMB 13768 / 1H11).